The following is a 165-amino-acid chain: Phosphopantetheine adenylyltransferase (165 aa).

S9 contacts substrate. Residues 9 to 10 (SF) and H17 contribute to the ATP site. Residues K41, I75, and R89 each contribute to the substrate site. Residues 90 to 92 (GVR), E100, and 125 to 131 (YLFVRSD) contribute to the ATP site.

The protein belongs to the bacterial CoaD family. As to quaternary structure, homohexamer. Mg(2+) serves as cofactor.

The protein resides in the cytoplasm. The catalysed reaction is (R)-4'-phosphopantetheine + ATP + H(+) = 3'-dephospho-CoA + diphosphate. Its pathway is cofactor biosynthesis; coenzyme A biosynthesis; CoA from (R)-pantothenate: step 4/5. Its function is as follows. Reversibly transfers an adenylyl group from ATP to 4'-phosphopantetheine, yielding dephospho-CoA (dPCoA) and pyrophosphate. The chain is Phosphopantetheine adenylyltransferase from Borrelia turicatae (strain 91E135).